Reading from the N-terminus, the 421-residue chain is Serine protease HTRA2, mitochondrial (421 aa).

The helical transmembrane segment at 63-81 threads the bilayer; sequence VIRFFVPFSLGALASTMVA. The IAP-binding signature appears at 74–77; sequence ALAS. The tract at residues 138–301 is serine protease; sequence SNGSGFVIEQ…IPIDYVKVFL (164 aa). Active-site charge relay system residues include histidine 156, aspartate 188, and serine 265. The region spanning 324–409 is the PDZ domain; sequence MGITMLTLTP…ELDIVILRGV (86 aa).

It belongs to the peptidase S1C family. Interacts with th/DIAP1 (via BIR 2 domain).

The protein localises to the mitochondrion intermembrane space. The protein resides in the mitochondrion membrane. It carries out the reaction Cleavage of non-polar aliphatic amino-acids at the P1 position, with a preference for Val, Ile and Met. At the P2 and P3 positions, Arg is selected most strongly with a secondary preference for other hydrophilic residues.. In terms of biological role, serine protease that shows proteolytic activity against a non-specific substrate beta-casein. Promotes or induces cell death either by direct binding to and inhibition of BIRC proteins (also called inhibitor of apoptosis proteins, IAPs), leading to an increase in caspase activity, or by a BIRC inhibition-independent, caspase-independent and serine protease activity-dependent mechanism. Can antagonize antiapoptotic activity of th/Diap1 by directly inducing the degradation of th/Diap1. This is Serine protease HTRA2, mitochondrial from Drosophila virilis (Fruit fly).